Reading from the N-terminus, the 316-residue chain is Neuroguidin (316 aa).

2 disordered regions span residues 143–172 and 280–316; these read SEAD…VKKY and SALT…RKRH. Acidic residues predominate over residues 145–157; that stretch reads ADEGESDSGEDCA. Over residues 297–316 the composition is skewed to basic residues; the sequence is KKSRKGPKKSKKRKGFRKRH.

This sequence belongs to the SAS10 family. Part of the small subunit (SSU) processome, composed of more than 70 proteins and the RNA chaperone small nucleolar RNA (snoRNA) U3.

The protein resides in the nucleus. Its subcellular location is the nucleolus. The protein localises to the chromosome. It is found in the centromere. It localises to the cytoplasm. The protein resides in the cell projection. Its subcellular location is the axon. The protein localises to the dendrite. It is found in the filopodium. In terms of biological role, part of the small subunit (SSU) processome, first precursor of the small eukaryotic ribosomal subunit. During the assembly of the SSU processome in the nucleolus, many ribosome biogenesis factors, an RNA chaperone and ribosomal proteins associate with the nascent pre-rRNA and work in concert to generate RNA folding, modifications, rearrangements and cleavage as well as targeted degradation of pre-ribosomal RNA by the RNA exosome. Its dissociation from the complex determines the transition from state pre-A1 to state pre-A1*. May inhibit mRNA translation. In Xenopus tropicalis (Western clawed frog), this protein is Neuroguidin (ngdn).